A 783-amino-acid polypeptide reads, in one-letter code: Galactinol--sucrose galactosyltransferase (783 aa).

It belongs to the glycosyl hydrolases 36 family.

The catalysed reaction is alpha-D-galactosyl-(1-&gt;3)-1D-myo-inositol + sucrose = raffinose + myo-inositol. Inhibited by Ag(2)+, Hg(2+), Zn(2+), p-chloromercuribenzoate (pCMB) and 1-deoxygalactonojirimycin. Functionally, transglycosidase operating by a ping-pong reaction mechanism. Involved in the synthesis of raffinose, a major soluble carbohydrate in seeds, roots and tubers. Specific for galactinol and p-nitrophenyl-alpha-D-galactoside as galactosyl donors. Able to utilize sucrose, lactose, 4-beta-galactobiose, N-acetyl-D-lactosamine, trehalose and lacto-N-biose as acceptors. May also act as a glycoside hydrolase. The sequence is that of Galactinol--sucrose galactosyltransferase (RFS) from Oryza sativa subsp. japonica (Rice).